The chain runs to 633 residues: Putative serine/threonine-protein kinase L232 (633 aa).

Residues 10–314 (YTIVDKLSEG…QSRKLFYEIL (305 aa)) form the Protein kinase domain. Residues 16–24 (LSEGTYGIV) and Lys39 contribute to the ATP site. Catalysis depends on Asp133, which acts as the Proton acceptor.

The protein belongs to the protein kinase superfamily. Ser/Thr protein kinase family.

The catalysed reaction is L-seryl-[protein] + ATP = O-phospho-L-seryl-[protein] + ADP + H(+). The enzyme catalyses L-threonyl-[protein] + ATP = O-phospho-L-threonyl-[protein] + ADP + H(+). The protein is Putative serine/threonine-protein kinase L232 of Acanthamoeba polyphaga mimivirus (APMV).